We begin with the raw amino-acid sequence, 447 residues long: MREIVHIQAGQCGNQIGSKFWEVISEEHGIDPSGVYQGKLSTQLERSYVYFNEASSGKYVPRAVLLDLEPGTMDSVRSGPYGSLFRPDNYVFGQSGAGNNWAKGHYTEGAELVDTVLDVIRKECEGCECIQGFQMTHSLGGGTGAGMGTLLISKYREEYPDRIMTTFSVMPSPKVSDTVVEPYNATLSIHQLVENTDETFCIDNEALYDISLRTLKLPNPTYGDLNHLVSATMSGVTTCLRFPGQLNADLRKLAVNMVPFPRLHFFMPGFAPLTSRGSQDYRMHSVSDLTQQLFDAKNMMTACDPRHGRYLTVAAVFRGKMSMKEVDEQMFSIQNKMSPYFVEWIPNNVKTAVCDIPPTGLEMSATFIGNSTAIQEIFKRISEQFTAMFRRKAFLHWYTGEGMDEMEFTEAESNMNDLVSEYQQYQEARSTDSDEYDNEEYYNQQEE.

GTP-binding residues include Gln-11, Glu-69, Ser-138, Gly-142, Thr-143, Gly-144, Asn-204, and Asn-226. Glu-69 is a Mg(2+) binding site. A disordered region spans residues 424–447; the sequence is QYQEARSTDSDEYDNEEYYNQQEE. Residues 433 to 447 are compositionally biased toward acidic residues; that stretch reads SDEYDNEEYYNQQEE.

The protein belongs to the tubulin family. As to quaternary structure, dimer of alpha and beta chains. A typical microtubule is a hollow water-filled tube with an outer diameter of 25 nm and an inner diameter of 15 nM. Alpha-beta heterodimers associate head-to-tail to form protofilaments running lengthwise along the microtubule wall with the beta-tubulin subunit facing the microtubule plus end conferring a structural polarity. Microtubules usually have 13 protofilaments but different protofilament numbers can be found in some organisms and specialized cells. Mg(2+) is required as a cofactor. Lens specific.

It localises to the cytoplasm. The protein resides in the cytoskeleton. Its function is as follows. Tubulin is the major constituent of microtubules, a cylinder consisting of laterally associated linear protofilaments composed of alpha- and beta-tubulin heterodimers. Microtubules grow by the addition of GTP-tubulin dimers to the microtubule end, where a stabilizing cap forms. Below the cap, tubulin dimers are in GDP-bound state, owing to GTPase activity of alpha-tubulin. The protein is Tubulin beta chain of Enteroctopus dofleini (North Pacific giant octopus).